The sequence spans 298 residues: Probable alpha-L-glutamate ligase (298 aa).

The ATP-grasp domain maps to Leu-108–Glu-290. Residues Lys-144, Asp-181–Phe-182, Asp-190, and Arg-214–Asn-216 each bind ATP. Mg(2+)-binding residues include Asp-251, Glu-263, and Asn-265. 3 residues coordinate Mn(2+): Asp-251, Glu-263, and Asn-265.

Belongs to the RimK family. Mg(2+) serves as cofactor. Requires Mn(2+) as cofactor.

In Haemophilus influenzae (strain PittEE), this protein is Probable alpha-L-glutamate ligase.